A 172-amino-acid polypeptide reads, in one-letter code: MKFAQPHNPLLPSVPDIVFSAIVLAIVLPFFWWFVIPRISKLLSDRSSLIEGKISEAASAHARALETLELRKQQLDEAKSEASQIRQEARDDAQLILQQARETADETAERVMLHAREQIQAEKAAALLSLRSEIATLALAAAGKAVSEKLDDDKKSRELVSASIAKMAEDAG.

The chain crosses the membrane as a helical span at residues 17–37 (IVFSAIVLAIVLPFFWWFVIP).

Belongs to the ATPase B chain family. In terms of assembly, F-type ATPases have 2 components, F(1) - the catalytic core - and F(0) - the membrane proton channel. F(1) has five subunits: alpha(3), beta(3), gamma(1), delta(1), epsilon(1). F(0) has three main subunits: a(1), b(2) and c(10-14). The alpha and beta chains form an alternating ring which encloses part of the gamma chain. F(1) is attached to F(0) by a central stalk formed by the gamma and epsilon chains, while a peripheral stalk is formed by the delta and b chains.

The protein resides in the cell membrane. In terms of biological role, f(1)F(0) ATP synthase produces ATP from ADP in the presence of a proton or sodium gradient. F-type ATPases consist of two structural domains, F(1) containing the extramembraneous catalytic core and F(0) containing the membrane proton channel, linked together by a central stalk and a peripheral stalk. During catalysis, ATP synthesis in the catalytic domain of F(1) is coupled via a rotary mechanism of the central stalk subunits to proton translocation. Functionally, component of the F(0) channel, it forms part of the peripheral stalk, linking F(1) to F(0). This is ATP synthase subunit b from Tropheryma whipplei (strain TW08/27) (Whipple's bacillus).